The following is a 419-amino-acid chain: Dual specificity mitogen-activated protein kinase kinase 7 (419 aa).

An N-acetylalanine modification is found at alanine 2. A coiled-coil region spans residues 2–30 (AASSLEQKLSRLEAKLKQENREARRRIDL). Basic and acidic residues predominate over residues 18-30 (KQENREARRRIDL). The interval 18-76 (KQENREARRRIDLNLDISPQRPRPTLQLPLANDGGSRSPSSESSPQHPTPPARPRHMLG) is disordered. Residues 36–63 (PQRPRPTLQLPLANDGGSRSPSSESSPQ) are compositionally biased toward low complexity. A d domain region spans residues 37 to 57 (QRPRPTLQLPLANDGGSRSPS). The Protein kinase domain occupies 120–380 (LENLGEMGSG…YNKLLEHSFI (261 aa)). ATP-binding positions include 126-134 (MGSGTCGQV) and lysine 149. Aspartate 243 serves as the catalytic Proton acceptor. Serine 271 bears the Phosphoserine; by MAP3K mark. Position 275 is a phosphothreonine; by MAP3K (threonine 275). Positions 377–400 (HSFIKRYETLEVDVASWFKDVMAK) are DVD domain. Residue serine 411 is modified to Phosphoserine.

It belongs to the protein kinase superfamily. STE Ser/Thr protein kinase family. MAP kinase kinase subfamily. Interacts with isoform 1 of VRK2. Interacts (via its D domain) with its substrates MAPK8/JNK1, MAPK9/JNK2 and MAPK10/JNK3. Interacts (via its DVD domain) with MAP3Ks activators like MAP3K5/ASK1 and MAP3K1/MEKK1. Interacts with MAPK8IP1/JIP1, MAPK8IP2/JIP2 and MAPK8IP3/JIP3 scaffold proteins. Interacts with RASSF7, the interaction promotes phosphorylation. Found in a complex with SH3RF1, RAC1, MAP3K11/MLK3, MAPK8IP1/JIP1 and MAPK8/JNK1. Found in a complex with SH3RF1, RAC2, MAP3K7/TAK1, MAPK8IP1/JIP1, MAPK8/JNK1 and MAPK9/JNK2. It depends on Mg(2+) as a cofactor. Post-translationally, activated by phosphorylation on Ser-271 and Thr-275 by MAP kinase kinase kinases (MAP3Ks). Ubiquitous; with highest level of expression in skeletal muscle. Isoform 3 is found at low levels in placenta, fetal liver, and skeletal muscle.

The protein resides in the nucleus. It is found in the cytoplasm. The catalysed reaction is L-seryl-[protein] + ATP = O-phospho-L-seryl-[protein] + ADP + H(+). It catalyses the reaction L-threonyl-[protein] + ATP = O-phospho-L-threonyl-[protein] + ADP + H(+). It carries out the reaction L-tyrosyl-[protein] + ATP = O-phospho-L-tyrosyl-[protein] + ADP + H(+). Its activity is regulated as follows. Activated by phosphorylation by specific MAP kinase kinase kinases such as MAP3K1/MEKK1, MAP3K3/MEKK3, MAP3K11/MLK3 and MAP3K12/DLK. Its function is as follows. Dual specificity protein kinase which acts as an essential component of the MAP kinase signal transduction pathway. Essential component of the stress-activated protein kinase/c-Jun N-terminal kinase (SAP/JNK) signaling pathway. With MAP2K4/MKK4, is the one of the only known kinase to directly activate the stress-activated protein kinase/c-Jun N-terminal kinases MAPK8/JNK1, MAPK9/JNK2 and MAPK10/JNK3. MAP2K4/MKK4 and MAP2K7/MKK7 both activate the JNKs by phosphorylation, but they differ in their preference for the phosphorylation site in the Thr-Pro-Tyr motif. MAP2K4/MKK4 shows preference for phosphorylation of the Tyr residue and MAP2K7/MKK7 for the Thr residue. The monophosphorylation of JNKs on the Thr residue is sufficient to increase JNK activity indicating that MAP2K7/MKK7 is important to trigger JNK activity, while the additional phosphorylation of the Tyr residue by MAP2K4/MKK4 ensures optimal JNK activation. Has a specific role in JNK signal transduction pathway activated by pro-inflammatory cytokines. The MKK/JNK signaling pathway is also involved in mitochondrial death signaling pathway, including the release cytochrome c, leading to apoptosis. Part of a non-canonical MAPK signaling pathway, composed of the upstream MAP3K12 kinase and downstream MAP kinases MAPK1/ERK2 and MAPK3/ERK1, that enhances the AP-1-mediated transcription of APP in response to APOE. The chain is Dual specificity mitogen-activated protein kinase kinase 7 (MAP2K7) from Homo sapiens (Human).